The chain runs to 146 residues: Large ribosomal subunit protein uL15 (146 aa).

The segment covering 1–13 has biased composition (basic and acidic residues); sequence MKLHELKPAEGSR. The tract at residues 1-65 is disordered; sequence MKLHELKPAE…PLYRRLPKRG (65 aa). Composition is skewed to gly residues over residues 21–31 and 42–52; these read RGIGSGNGKTA and SGGGVRPGFEG.

It belongs to the universal ribosomal protein uL15 family. Part of the 50S ribosomal subunit.

In terms of biological role, binds to the 23S rRNA. This is Large ribosomal subunit protein uL15 from Halalkalibacterium halodurans (strain ATCC BAA-125 / DSM 18197 / FERM 7344 / JCM 9153 / C-125) (Bacillus halodurans).